The sequence spans 333 residues: 5-formaminoimidazole-4-carboxamide-1-(beta)-D-ribofuranosyl 5'-monophosphate synthetase (333 aa).

The 5-amino-1-(5-phospho-beta-D-ribosyl)imidazole-4-carboxamide site is built by His-9 and Ser-73. The ATP-grasp domain occupies 94–324 (RNLFEWEANQ…ISREIKLAIN (231 aa)). Residues 124–184 (PEDI…VPMY) and Glu-206 contribute to the ATP site. Asn-230 serves as a coordination point for 5-amino-1-(5-phospho-beta-D-ribosyl)imidazole-4-carboxamide. Mg(2+)-binding residues include Glu-269 and Glu-282.

It belongs to the phosphohexose mutase family. It depends on Mg(2+) as a cofactor. The cofactor is Mn(2+).

It carries out the reaction 5-amino-1-(5-phospho-beta-D-ribosyl)imidazole-4-carboxamide + formate + ATP = 5-formamido-1-(5-phospho-D-ribosyl)imidazole-4-carboxamide + ADP + phosphate. It functions in the pathway purine metabolism; IMP biosynthesis via de novo pathway; 5-formamido-1-(5-phospho-D-ribosyl)imidazole-4-carboxamide from 5-amino-1-(5-phospho-D-ribosyl)imidazole-4-carboxamide (formate route): step 1/1. Its function is as follows. Catalyzes the ATP- and formate-dependent formylation of 5-aminoimidazole-4-carboxamide-1-beta-d-ribofuranosyl 5'-monophosphate (AICAR) to 5-formaminoimidazole-4-carboxamide-1-beta-d-ribofuranosyl 5'-monophosphate (FAICAR) in the absence of folates. This Sulfurisphaera tokodaii (strain DSM 16993 / JCM 10545 / NBRC 100140 / 7) (Sulfolobus tokodaii) protein is 5-formaminoimidazole-4-carboxamide-1-(beta)-D-ribofuranosyl 5'-monophosphate synthetase.